We begin with the raw amino-acid sequence, 103 residues long: Large ribosomal subunit protein uL24 (103 aa).

Belongs to the universal ribosomal protein uL24 family. As to quaternary structure, part of the 50S ribosomal subunit.

Functionally, one of two assembly initiator proteins, it binds directly to the 5'-end of the 23S rRNA, where it nucleates assembly of the 50S subunit. One of the proteins that surrounds the polypeptide exit tunnel on the outside of the subunit. This is Large ribosomal subunit protein uL24 from Actinobacillus pleuropneumoniae serotype 5b (strain L20).